Here is a 908-residue protein sequence, read N- to C-terminus: Protein O-mannosyltransferase 1 (908 aa).

2 disordered regions span residues 1 to 85 (MYNN…SAIN) and 115 to 160 (GSVE…SGSR). Positions 21 to 31 (QRRKTTTRSRS) are enriched in basic residues. Composition is skewed to polar residues over residues 39-54 (CTSENVIEKNQTNGAQ) and 132-149 (LTATPTTTPKQASPSPTI). Residues 190-210 (FTVNLSIDLFSWTLFLLAFCT) form a helical membrane-spanning segment. An N-linked (GlcNAc...) asparagine glycan is attached at asparagine 265. A run of 5 helical transmembrane segments spans residues 279 to 299 (VPIFWFRFIPALCGSLLAPAV), 311 to 328 (WAAALGGLLVVLDNSLLT), 331 to 351 (RFVLMESMLLLASTLGIACLL), 370 to 390 (AGVLLACAGAVKYIGFLALAL), and 418 to 438 (LSRLLLFVGIPIAVYIGVFYV). 3 MIR domains span residues 473–534 (PLAV…VKRP), 545–602 (PDVI…VEIL), and 608–664 (GDSW…VEEH). The next 4 helical transmembrane spans lie at 749 to 769 (VLIWYTASAGILVYATLLAFY), 788 to 808 (FLMAGDTFFVGYMMHYLPYYF), 813 to 833 (LFLHNYLPAFVFKLLLLCFVV), and 857 to 877 (LALLLWLLAVGSVFVKFLPLS).

This sequence belongs to the glycosyltransferase 39 family. In terms of assembly, interacts with tw/POMT2.

It localises to the endoplasmic reticulum membrane. It carries out the reaction a di-trans,poly-cis-dolichyl beta-D-mannosyl phosphate + L-seryl-[protein] = 3-O-(alpha-D-mannosyl)-L-seryl-[protein] + a di-trans,poly-cis-dolichyl phosphate + H(+). The catalysed reaction is a di-trans,poly-cis-dolichyl beta-D-mannosyl phosphate + L-threonyl-[protein] = 3-O-(alpha-D-mannosyl)-L-threonyl-[protein] + a di-trans,poly-cis-dolichyl phosphate + H(+). It functions in the pathway protein modification; protein glycosylation. In terms of biological role, rt/POMT1 and tw/POMT2 function as a protein O-mannosyltransferase in association with each other to generate and maintain normal muscle development. The protein is Protein O-mannosyltransferase 1 of Drosophila pseudoobscura pseudoobscura (Fruit fly).